Here is an 89-residue protein sequence, read N- to C-terminus: Shiga toxin subunit B (89 aa).

The first 20 residues, 1–20, serve as a signal peptide directing secretion; that stretch reads MKKTLLIAASLSFFSASALA. A disulfide bridge connects residues Cys-24 and Cys-77.

It belongs to the stxB family. In terms of assembly, shiga toxin contains a single subunit A and five copies of subunit B.

Its function is as follows. The B subunit is responsible for the binding of the holotoxin to specific receptors on the target cell surface, such as globotriaosylceramide (Gb3) in human intestinal microvilli. This Shigella sonnei (Shigella sonnei bacteriophage 7888) protein is Shiga toxin subunit B (stxB).